The primary structure comprises 313 residues: MESIGVLMMCPMSSYLENELEKRFNLLRFWTSPEKSVLLETHRNSIRAVVGNASAGADAQLISDLPNLEIVSSFSVGLDKIDLGKCKEKGIRVTNTPDVLTEDVADLAIGLILALLRRLCECDRYVRSGKWKQGEFQLTTKFSGKSVGIIGLGRIGTAIAKRAEAFSCPINYYSRTIKPDVAYKYYPTVVDLAQNSDILVVACPLTEQTRHIVDRQVMDALGAKGVLINIGRGPHVDEQELIKALTEGRLGGAALDVFEQEPHVPEELFGLENVVLLPHVGSGTVETRNAMADLVVGNLEAHFSGKSLLTPVV.

NADP(+) contacts are provided by residues 152 to 155, 174 to 176, 230 to 232, and D256; these read LGRI, SRT, and IGR. R232 is a catalytic residue. E261 is a catalytic residue. H279 acts as the Proton donor in catalysis. 279–281 lines the NADP(+) pocket; sequence HVG.

Belongs to the D-isomer specific 2-hydroxyacid dehydrogenase family. GyaR subfamily. As to quaternary structure, homodimer.

Its subcellular location is the cytoplasm. The catalysed reaction is glycolate + NADP(+) = glyoxylate + NADPH + H(+). It catalyses the reaction (R)-glycerate + NAD(+) = 3-hydroxypyruvate + NADH + H(+). It carries out the reaction (R)-glycerate + NADP(+) = 3-hydroxypyruvate + NADPH + H(+). Strongly inhibited by oxalate. Its function is as follows. Catalyzes the NADPH-dependent reduction of glyoxylate and hydroxypyruvate (HP) into glycolate and glycerate in the cytoplasm, thus providing a cytosolic bypass to the photorespiratory core cycle. Mostly active in the presence of NADPH and hydroxypyruvate. The sequence is that of Glyoxylate/hydroxypyruvate reductase A HPR2 (HPR2) from Arabidopsis thaliana (Mouse-ear cress).